Consider the following 202-residue polypeptide: Recombination protein RecR (202 aa).

Residues Cys56 to Cys71 form a C4-type zinc finger. Residues Thr79–Pro179 form the Toprim domain.

It belongs to the RecR family.

In terms of biological role, may play a role in DNA repair. It seems to be involved in an RecBC-independent recombinational process of DNA repair. It may act with RecF and RecO. The polypeptide is Recombination protein RecR (Nocardia farcinica (strain IFM 10152)).